We begin with the raw amino-acid sequence, 157 residues long: Ribonuclease H (157 aa).

An RNase H type-1 domain is found at 1 to 146; sequence MPDLFAYTDG…ADELARAGMA (146 aa). Mg(2+) contacts are provided by aspartate 9, glutamate 52, aspartate 74, and aspartate 138.

It belongs to the RNase H family. In terms of assembly, monomer. Mg(2+) is required as a cofactor.

It is found in the cytoplasm. It catalyses the reaction Endonucleolytic cleavage to 5'-phosphomonoester.. Endonuclease that specifically degrades the RNA of RNA-DNA hybrids. The polypeptide is Ribonuclease H (Ruegeria sp. (strain TM1040) (Silicibacter sp.)).